Consider the following 344-residue polypeptide: Probable glucan endo-1,3-beta-glucosidase At4g16260 (344 aa).

The N-terminal stretch at M1–G21 is a signal peptide. The active-site Proton donor is the E116. The active-site Nucleophile is the E257.

The protein belongs to the glycosyl hydrolase 17 family. In terms of assembly, (Microbial infection) Interacts with the 30C02 effector protein (AC G3GD54) of the beet cyst nematode Heterodera schachtii. Interaction with the 30C02 effector protein may potentially suppress beta-1,3-glucanase activity and plant defense.

The protein resides in the secreted. It catalyses the reaction Hydrolysis of (1-&gt;3)-beta-D-glucosidic linkages in (1-&gt;3)-beta-D-glucans.. Its function is as follows. May be involved in plant defense against cyst nematode pathogens. The protein is Probable glucan endo-1,3-beta-glucosidase At4g16260 of Arabidopsis thaliana (Mouse-ear cress).